A 332-amino-acid polypeptide reads, in one-letter code: Glyceraldehyde-3-phosphate dehydrogenase 2 (332 aa).

NAD(+) contacts are provided by residues 11 to 12 (RI), D32, and R77. Residues 148–150 (SCT), T179, 208–209 (TG), and R231 each bind D-glyceraldehyde 3-phosphate. The Nucleophile role is filled by C149. Phosphotyrosine is present on Y273. T274 carries the phosphothreonine modification. N313 serves as a coordination point for NAD(+).

It belongs to the glyceraldehyde-3-phosphate dehydrogenase family. As to quaternary structure, homotetramer.

The protein localises to the cytoplasm. It catalyses the reaction D-glyceraldehyde 3-phosphate + phosphate + NAD(+) = (2R)-3-phospho-glyceroyl phosphate + NADH + H(+). The protein operates within carbohydrate degradation; glycolysis; pyruvate from D-glyceraldehyde 3-phosphate: step 1/5. This Drosophila melanogaster (Fruit fly) protein is Glyceraldehyde-3-phosphate dehydrogenase 2 (Gapdh2).